Here is a 210-residue protein sequence, read N- to C-terminus: Ribosomal RNA small subunit methyltransferase G (210 aa).

S-adenosyl-L-methionine-binding positions include G75, F80, 98 to 100 (EST), 126 to 127 (AE), and R141.

Belongs to the methyltransferase superfamily. RNA methyltransferase RsmG family.

The protein resides in the cytoplasm. In terms of biological role, specifically methylates the N7 position of a guanine in 16S rRNA. This is Ribosomal RNA small subunit methyltransferase G from Solibacter usitatus (strain Ellin6076).